Here is a 27-residue protein sequence, read N- to C-terminus: Pregnancy-associated glycoprotein 59 (27 aa).

The protein belongs to the peptidase A1 family. Glycosylated. As to expression, placenta.

The polypeptide is Pregnancy-associated glycoprotein 59 (PAG59) (Capra hircus (Goat)).